A 444-amino-acid chain; its full sequence is Methylenetetrahydrofolate--tRNA-(uracil-5-)-methyltransferase TrmFO (444 aa).

10-15 (GAGLAG) is a binding site for FAD.

Belongs to the MnmG family. TrmFO subfamily. FAD is required as a cofactor.

Its subcellular location is the cytoplasm. The catalysed reaction is uridine(54) in tRNA + (6R)-5,10-methylene-5,6,7,8-tetrahydrofolate + NADH + H(+) = 5-methyluridine(54) in tRNA + (6S)-5,6,7,8-tetrahydrofolate + NAD(+). It catalyses the reaction uridine(54) in tRNA + (6R)-5,10-methylene-5,6,7,8-tetrahydrofolate + NADPH + H(+) = 5-methyluridine(54) in tRNA + (6S)-5,6,7,8-tetrahydrofolate + NADP(+). Functionally, catalyzes the folate-dependent formation of 5-methyl-uridine at position 54 (M-5-U54) in all tRNAs. In Streptococcus pneumoniae serotype 2 (strain D39 / NCTC 7466), this protein is Methylenetetrahydrofolate--tRNA-(uracil-5-)-methyltransferase TrmFO.